The sequence spans 358 residues: Putative ZDHHC-type palmitoyltransferase 4 (358 aa).

Helical transmembrane passes span 28 to 48, 57 to 77, 171 to 191, and 210 to 230; these read FVGF…TIIF, LFFI…TYGI, YFFL…AHSL, and LLVI…GSFG. One can recognise a DHHC domain in the interval 127 to 177; the sequence is SYCKKCSKAKPPRCHHCSVCDKCVLKMDHHCPWIGGCVGFYNYRYFFLFLS. N-linked (GlcNAc...) asparagine glycosylation is found at asparagine 255 and asparagine 296. The tract at residues 302–358 is disordered; it reads NNKNNENNENNENNEIDNHNNNNNNNNNNNNNEKEDNINENDNLISYDTDEYNRHKK. A compositionally biased stretch (low complexity) spans 305–332; sequence NNENNENNENNEIDNHNNNNNNNNNNNN.

Belongs to the DHHC palmitoyltransferase family.

Its subcellular location is the membrane. It catalyses the reaction L-cysteinyl-[protein] + hexadecanoyl-CoA = S-hexadecanoyl-L-cysteinyl-[protein] + CoA. In Dictyostelium discoideum (Social amoeba), this protein is Putative ZDHHC-type palmitoyltransferase 4.